Reading from the N-terminus, the 290-residue chain is Sodium/potassium-transporting ATPase subunit beta-2 (290 aa).

The Cytoplasmic portion of the chain corresponds to 1–39 (MVIQKEKKSCGQVVEEWKEFVWNPRTHQFMGRTGTSWAF). A helical; Signal-anchor for type II membrane protein transmembrane segment spans residues 40-67 (ILLFYLVFYGFLTAMFTLTMWVMLQTVS). The Extracellular segment spans residues 68–290 (DHTPKYQDRL…VAFKLRINKT (223 aa)). Asparagine 96 and asparagine 118 each carry an N-linked (GlcNAc...) asparagine glycan. A disulfide bridge connects residues cysteine 129 and cysteine 150. Asparagine 153 is a glycosylation site (N-linked (GlcNAc...) asparagine). A disulfide bond links cysteine 160 and cysteine 177. Asparagine 193, asparagine 197, and asparagine 238 each carry an N-linked (GlcNAc...) asparagine glycan. Residues 193–289 (NQSMNVTCVG…RVAFKLRINK (97 aa)) form an immunoglobulin-like region. Cysteine 200 and cysteine 261 form a disulfide bridge.

It belongs to the X(+)/potassium ATPases subunit beta family. In terms of assembly, the sodium/potassium-transporting ATPase is composed of a catalytic alpha subunit, an auxiliary non-catalytic beta subunit and an additional regulatory subunit. Interacts with BSG.

Its subcellular location is the cell membrane. In terms of biological role, this is the non-catalytic component of the active enzyme, which catalyzes the hydrolysis of ATP coupled with the exchange of Na(+) and K(+) ions across the plasma membrane. The exact function of the beta-2 subunit is not known. Mediates cell adhesion of neurons and astrocytes, and promotes neurite outgrowth. The protein is Sodium/potassium-transporting ATPase subunit beta-2 (ATP1B2) of Bos taurus (Bovine).